The sequence spans 500 residues: TBC1 domain family member 10A (500 aa).

A compositionally biased stretch (basic and acidic residues) spans 1-10; it reads MAKSSRENGP. The disordered stretch occupies residues 1-45; the sequence is MAKSSRENGPREPAAGGSLSGTRESLAQGPDAATADELSSLGSDS. Phosphoserine occurs at positions 39, 40, and 45. The Rab-GAP TBC domain occupies 111-299; the sequence is GIPPSLRGRA…RVWDMFFCEG (189 aa). 2 disordered regions span residues 396–415 and 420–500; these read AEPG…LPPD and SSKA…DTYL. Ser407 is modified (phosphoserine). The span at 438–453 shows a compositional bias: polar residues; sequence TSAQLDKSPGLSQATV. Position 477 is a phosphothreonine (Thr477). The segment at 497-500 is binding to the PDZ domain of EBP50; it reads DTYL.

Binds to the first PDZ domain of NHERF1 and NHERF2. As to expression, expressed in most tissues, except for skeletal muscle.

It localises to the cell projection. Its subcellular location is the microvillus. Its function is as follows. GTPase-activating protein (GAP) specific for RAB27A and RAB35. Does not show GAP activity for RAB2A, RAB3A and RAB4A. The protein is TBC1 domain family member 10A (Tbc1d10a) of Mus musculus (Mouse).